We begin with the raw amino-acid sequence, 296 residues long: GTP-binding protein GEM (296 aa).

Disordered stretches follow at residues 1-20 (MTLN…PQQQ) and 37-68 (PHQY…SVIS). Residues 57 to 68 (SWSSDSTDSVIS) are compositionally biased toward low complexity. Residues 82 to 89 (GEQGVGKS) and 191 to 194 (NKSD) each bind GTP. Residues 266–285 (ARRFWGKIVAKNNKNMAFKL) form a calmodulin-binding region.

Belongs to the small GTPase superfamily. RGK family. As to quaternary structure, interacts with calmodulin in a Ca(2+)-dependent manner. Binds ROCK1. Post-translationally, phosphorylated on tyrosine residues. As to expression, most abundant in thymus, spleen, kidney, lung, and testis. Less abundant in heart, brain, liver and skeletal muscle.

It localises to the cell membrane. Its function is as follows. Could be a regulatory protein, possibly participating in receptor-mediated signal transduction at the plasma membrane. Has guanine nucleotide-binding activity but undetectable intrinsic GTPase activity. The polypeptide is GTP-binding protein GEM (GEM) (Homo sapiens (Human)).